The sequence spans 215 residues: 3,4-dihydroxy-2-butanone 4-phosphate synthase (215 aa).

D-ribulose 5-phosphate-binding positions include 38-39 (RE), Asp-43, 151-155 (RRGHT), and Glu-175. Residue Glu-39 participates in Mg(2+) binding. His-154 contacts Mg(2+).

Belongs to the DHBP synthase family. In terms of assembly, homodimer. Mg(2+) is required as a cofactor. The cofactor is Mn(2+).

It catalyses the reaction D-ribulose 5-phosphate = (2S)-2-hydroxy-3-oxobutyl phosphate + formate + H(+). It functions in the pathway cofactor biosynthesis; riboflavin biosynthesis; 2-hydroxy-3-oxobutyl phosphate from D-ribulose 5-phosphate: step 1/1. Its function is as follows. Catalyzes the conversion of D-ribulose 5-phosphate to formate and 3,4-dihydroxy-2-butanone 4-phosphate. In Haemophilus influenzae (strain PittEE), this protein is 3,4-dihydroxy-2-butanone 4-phosphate synthase.